The chain runs to 121 residues: Large ribosomal subunit protein eL18 (121 aa).

The protein belongs to the eukaryotic ribosomal protein eL18 family.

This is Large ribosomal subunit protein eL18 from Methanothermobacter thermautotrophicus (strain ATCC 29096 / DSM 1053 / JCM 10044 / NBRC 100330 / Delta H) (Methanobacterium thermoautotrophicum).